The following is a 137-amino-acid chain: MLVPKRVKHRREFRGKMRGEAKGGKEVSFGEYGLQATTSHWITNRQIEAARIAMTRYMKRGGKVWIKIFPHKSYTAKAIGVRMGSGKGAPEGWVAPVKRGKVMFEIAGVSEEVAREAFRLASHKLPVKSKFVKREAE.

The protein belongs to the universal ribosomal protein uL16 family. As to quaternary structure, part of the 50S ribosomal subunit.

Functionally, binds 23S rRNA and is also seen to make contacts with the A and possibly P site tRNAs. The chain is Large ribosomal subunit protein uL16 from Streptococcus thermophilus (strain CNRZ 1066).